A 437-amino-acid polypeptide reads, in one-letter code: GTPase Era, mitochondrial (437 aa).

Residues 1 to 43 (MAASSWRGAVLLRTVSGLWQAGPDAAREWMTRLPSLLGFQQRC) constitute a mitochondrion transit peptide. The 219-residue stretch at 112–330 (RVLRVVLLGA…QYLLAQARPG (219 aa)) folds into the Era-type G domain. The segment at 120–127 (GAPNAGKS) is G1. 120-127 (GAPNAGKS) contacts GTP. A G2 region spans residues 146 to 150 (HTTRS). The interval 167 to 170 (DTPG) is G3. 167 to 171 (DTPGL) is a GTP binding site. Residue serine 173 is modified to Phosphoserine. Residue 236–239 (NKVD) coordinates GTP. The interval 236–239 (NKVD) is G4. The disordered stretch occupies residues 264–296 (LKTKQALRSRPDTHCPSPAAQGPNPQPVRDPQQ). The tract at residues 308–310 (LSA) is G5. The KH type-2 domain occupies 360 to 437 (LPEEVPYNVQ…QLRLSVKLLK (78 aa)).

Belongs to the TRAFAC class TrmE-Era-EngA-EngB-Septin-like GTPase superfamily. Era GTPase family.

It is found in the mitochondrion matrix. It localises to the mitochondrion inner membrane. Probable GTPase that plays a role in the mitochondrial ribosomal small subunit assembly. Specifically binds the 12S mitochondrial rRNA (12S mt-rRNA) to a 33 nucleotide section delineating the 3' terminal stem-loop region. May act as a chaperone that protects the 12S mt-rRNA on the 28S mitoribosomal subunit during ribosomal small subunit assembly. The polypeptide is GTPase Era, mitochondrial (ERAL1) (Bos taurus (Bovine)).